A 218-amino-acid chain; its full sequence is Mediator of RNA polymerase II transcription subunit 20 (218 aa).

Belongs to the Mediator complex subunit 20 family. As to quaternary structure, component of the Mediator complex.

The protein resides in the nucleus. Functionally, component of the Mediator complex, a coactivator involved in the regulated transcription of nearly all RNA polymerase II-dependent genes. Mediator functions as a bridge to convey information from gene-specific regulatory proteins to the basal RNA polymerase II transcription machinery. Mediator is recruited to promoters by direct interactions with regulatory proteins and serves as a scaffold for the assembly of a functional preinitiation complex with RNA polymerase II and the general transcription factors. This is Mediator of RNA polymerase II transcription subunit 20 (SRB2) from Yarrowia lipolytica (strain CLIB 122 / E 150) (Yeast).